The following is a 214-amino-acid chain: Nucleoside triphosphate pyrophosphatase (214 aa).

Aspartate 79 acts as the Proton acceptor in catalysis.

The protein belongs to the Maf family. The cofactor is a divalent metal cation.

It localises to the cytoplasm. The catalysed reaction is a ribonucleoside 5'-triphosphate + H2O = a ribonucleoside 5'-phosphate + diphosphate + H(+). It catalyses the reaction a 2'-deoxyribonucleoside 5'-triphosphate + H2O = a 2'-deoxyribonucleoside 5'-phosphate + diphosphate + H(+). In terms of biological role, nucleoside triphosphate pyrophosphatase. May have a dual role in cell division arrest and in preventing the incorporation of modified nucleotides into cellular nucleic acids. The polypeptide is Nucleoside triphosphate pyrophosphatase (Rhodococcus jostii (strain RHA1)).